The following is a 278-amino-acid chain: Protein irg-2 (278 aa).

Residues 152-179 (NSIRGQPFKSLQPENRTPTQVTGHQQES) are disordered. Positions 163 to 179 (QPENRTPTQVTGHQQES) are enriched in polar residues.

Functionally, plays a role in innate immunity by conferring resistance to virulent strains of the Gram-negative bacterium P.aeruginosa via the zip-2 pathway and independent of the pmk-1 p38MAPK pathway. Induced as part of several immune responses to translational inhibition arising from endocytosis of ToxA during P.aeruginosa infection or exposure to exogenous cycloheximide. This is Protein irg-2 from Caenorhabditis elegans.